The following is an 83-amino-acid chain: UPF0297 protein CLK_1948 (83 aa).

Belongs to the UPF0297 family.

The protein is UPF0297 protein CLK_1948 of Clostridium botulinum (strain Loch Maree / Type A3).